Reading from the N-terminus, the 80-residue chain is Toxin TdNa1 (80 aa).

Residues 1-20 (MKGIILFISCLMLIDVVVES) form the signal peptide. One can recognise an LCN-type CS-alpha/beta domain in the interval 21–79 (RDAYPADWRGCKFSCFWGSSSWCNEECTSLGGSSGYCAWPACWCYGLPDSVRYYNNKCH). 4 disulfides stabilise this stretch: Cys31/Cys78, Cys35/Cys57, Cys43/Cys62, and Cys47/Cys64.

The protein belongs to the long (4 C-C) scorpion toxin superfamily. Sodium channel inhibitor family. Beta subfamily. As to expression, expressed by the venom gland.

Its subcellular location is the secreted. Its function is as follows. Inhibits the sodium (Nav) currents in an apparent irreversible manner. Produces small depolarization and induces repetitive firing in squid axons. Is specific for arthropods (crickets, triatomides, crabs and squids), but is non-toxic to mice. This chain is Toxin TdNa1, found in Tityus discrepans (Venezuelan scorpion).